Consider the following 98-residue polypeptide: MKFSKLSLTLALILTQVLFVLCGKINEDFMKHGLESQALHDEIRKPIDSENPDTERLLDCLLDNRVCSSDKDCCGMTPSCTMGLCVPSVGGLVGGILG.

Residues 1–22 (MKFSKLSLTLALILTQVLFVLC) form the signal peptide. Positions 24 to 56 (KINEDFMKHGLESQALHDEIRKPIDSENPDTER) are excised as a propeptide. Disulfide bonds link cysteine 60–cysteine 74, cysteine 67–cysteine 80, and cysteine 73–cysteine 85. At leucine 97 the chain carries Leucine amide.

Belongs to the neurotoxin 15 family. 02 (omega-actx) subfamily. Expressed by the venom gland.

The protein resides in the secreted. Functionally, potent inhibitor of insect, but not mammalian, voltage-gated calcium channels (Cav). This is Omega-hexatoxin-Hr2b from Atrax robustus (Sydney funnel-web spider).